The sequence spans 156 residues: Small ribosomal subunit protein uS7 (156 aa).

The protein belongs to the universal ribosomal protein uS7 family. As to quaternary structure, part of the 30S ribosomal subunit. Contacts proteins S9 and S11.

In terms of biological role, one of the primary rRNA binding proteins, it binds directly to 16S rRNA where it nucleates assembly of the head domain of the 30S subunit. Is located at the subunit interface close to the decoding center, probably blocks exit of the E-site tRNA. This is Small ribosomal subunit protein uS7 from Shewanella sp. (strain ANA-3).